Consider the following 119-residue polypeptide: Large ribosomal subunit protein bL20 (119 aa).

This sequence belongs to the bacterial ribosomal protein bL20 family.

Its function is as follows. Binds directly to 23S ribosomal RNA and is necessary for the in vitro assembly process of the 50S ribosomal subunit. It is not involved in the protein synthesizing functions of that subunit. This Xylella fastidiosa (strain M23) protein is Large ribosomal subunit protein bL20.